The sequence spans 247 residues: ATP synthase subunit a, chloroplastic (247 aa).

Helical transmembrane passes span 38-58, 95-115, 134-154, 199-219, and 220-240; these read QVLITSWVVIAILLGSAAIAV, VPFIGTMFLFIFVSNWSGALL, INTTVALALLTSVAYFYAGLT, LVVVVLVSLVPLVVPIPVMFL, and GLFTSGIQALIFATLAAAYIG.

It belongs to the ATPase A chain family. In terms of assembly, F-type ATPases have 2 components, CF(1) - the catalytic core - and CF(0) - the membrane proton channel. CF(1) has five subunits: alpha(3), beta(3), gamma(1), delta(1), epsilon(1). CF(0) has four main subunits: a, b, b' and c.

It localises to the plastid. Its subcellular location is the chloroplast thylakoid membrane. Its function is as follows. Key component of the proton channel; it plays a direct role in the translocation of protons across the membrane. This is ATP synthase subunit a, chloroplastic from Calycanthus floridus var. glaucus (Eastern sweetshrub).